We begin with the raw amino-acid sequence, 145 residues long: Large ribosomal subunit protein uL15 (145 aa).

The disordered stretch occupies residues 20 to 54 (GRGMASGKGKTATRGHKGQNSRSGGGVRPGFEGGQ). A compositionally biased stretch (gly residues) spans 42–52 (SGGGVRPGFEG).

It belongs to the universal ribosomal protein uL15 family. As to quaternary structure, part of the 50S ribosomal subunit.

Functionally, binds to the 23S rRNA. In Mycoplasma mycoides subsp. mycoides SC (strain CCUG 32753 / NCTC 10114 / PG1), this protein is Large ribosomal subunit protein uL15.